We begin with the raw amino-acid sequence, 188 residues long: Trafficking protein particle complex subunit 5 (188 aa).

Ser-10 is subject to Phosphoserine.

The protein belongs to the TRAPP small subunits family. BET3 subfamily. In terms of assembly, component of the multisubunit TRAPP (transport protein particle) complex, which includes at least TRAPPC2, TRAPPC2L, TRAPPC3, TRAPPC3L, TRAPPC4, TRAPPC5, TRAPPC8, TRAPPC9, TRAPPC10, TRAPPC11 and TRAPPC12.

The protein localises to the golgi apparatus. It is found in the cis-Golgi network. The protein resides in the endoplasmic reticulum. Its function is as follows. May play a role in vesicular transport from endoplasmic reticulum to Golgi. This chain is Trafficking protein particle complex subunit 5 (TRAPPC5), found in Homo sapiens (Human).